The chain runs to 355 residues: Protein RecA (355 aa).

Residue 65–72 (GPESSGKT) coordinates ATP.

It belongs to the RecA family.

It localises to the cytoplasm. In terms of biological role, can catalyze the hydrolysis of ATP in the presence of single-stranded DNA, the ATP-dependent uptake of single-stranded DNA by duplex DNA, and the ATP-dependent hybridization of homologous single-stranded DNAs. It interacts with LexA causing its activation and leading to its autocatalytic cleavage. The sequence is that of Protein RecA from Pseudomonas putida (strain W619).